A 282-amino-acid chain; its full sequence is Ribosome-inactivating protein bryodin II (282 aa).

An N-terminal signal peptide occupies residues 1-21 (MRSIGFYSVLALYVGAHVTED). An N-linked (GlcNAc...) asparagine glycan is attached at Asn25. Glu183 is a catalytic residue.

It belongs to the ribosome-inactivating protein family. Type 1 RIP subfamily.

The catalysed reaction is Endohydrolysis of the N-glycosidic bond at one specific adenosine on the 28S rRNA.. Ribosome-inactivating protein of type 1, inhibits protein synthesis in animal cells. This chain is Ribosome-inactivating protein bryodin II, found in Bryonia dioica (Red bryony).